The chain runs to 505 residues: Gap junction alpha-10 protein (505 aa).

The Cytoplasmic portion of the chain corresponds to 1 to 16 (MGDWNLLGGILEEVHS). A helical transmembrane segment spans residues 17 to 37 (HSTIVGKIWLTILFIFRMLVL). At 38–76 (GVAAEDVWDDEQSAFACNTQQPGCNNICYDDAFPISLIR) the chain is on the extracellular side. A helical membrane pass occupies residues 77 to 97 (FWVLQIIFVSSPSLVYMGHAL). Over 98-165 (YRLRDFEKQR…TYVLHILTRS (68 aa)) the chain is Cytoplasmic. A helical transmembrane segment spans residues 166-186 (VLEVGFMIGQYILYGFQMHPI). Over 187–209 (YKCTQAPCPNSVDCFVSRPTEKT) the chain is Extracellular. A helical membrane pass occupies residues 210–230 (IFMLFMHSIAAISLLLNILEI). Residues 231-505 (FHLGIRKIMR…IIHETYVYVY (275 aa)) lie on the Cytoplasmic side of the membrane. Polar residues predominate over residues 371–383 (TMTASQHRPSSAL). The segment at 371–491 (TMTASQHRPS…SKSSHVDSPP (121 aa)) is disordered. The span at 437-446 (MSEKGQRHSD) shows a compositional bias: basic and acidic residues. Positions 447–460 (SGSSRSLNSSCLDF) are enriched in low complexity.

It belongs to the connexin family. Alpha-type (group II) subfamily. As to quaternary structure, a connexon is composed of a hexamer of connexins. As to expression, low levels were detected in skin, heart, kidney, testis, ovary, intestine. Expression not detected in brain, sciatic nerve or liver. According to PubMed:15147297 expression is detected only in horizontal cells in the inner nuclear layer of the retina and not in other neurons of the central nervous system or tissues. Detected in the outer plexiform layer of the retina (at protein level).

The protein resides in the cell membrane. It is found in the cell junction. Its subcellular location is the gap junction. One gap junction consists of a cluster of closely packed pairs of transmembrane channels, the connexons, through which materials of low MW diffuse from one cell to a neighboring cell. Involved in tracer coupling between horizontal cells of the retina. May play a role in the regulation of horizontal cell patterning. The polypeptide is Gap junction alpha-10 protein (Gja10) (Mus musculus (Mouse)).